A 56-amino-acid chain; its full sequence is UPF0434 protein CbuG_1535 (56 aa).

The protein belongs to the UPF0434 family.

The polypeptide is UPF0434 protein CbuG_1535 (Coxiella burnetii (strain CbuG_Q212) (Coxiella burnetii (strain Q212))).